The chain runs to 287 residues: Acetyl-coenzyme A carboxylase carboxyl transferase subunit beta (287 aa).

Positions 36-287 (MWVKCDRCGK…KVLYKILELH (252 aa)) constitute a CoA carboxyltransferase N-terminal domain. Zn(2+) is bound by residues Cys40, Cys43, Cys59, and Cys62. The C4-type zinc finger occupies 40–62 (CDRCGKTLYKKDLDENLKVCKFC).

It belongs to the AccD/PCCB family. As to quaternary structure, acetyl-CoA carboxylase is a heterohexamer composed of biotin carboxyl carrier protein (AccB), biotin carboxylase (AccC) and two subunits each of ACCase subunit alpha (AccA) and ACCase subunit beta (AccD). Requires Zn(2+) as cofactor.

The protein resides in the cytoplasm. It catalyses the reaction N(6)-carboxybiotinyl-L-lysyl-[protein] + acetyl-CoA = N(6)-biotinyl-L-lysyl-[protein] + malonyl-CoA. The protein operates within lipid metabolism; malonyl-CoA biosynthesis; malonyl-CoA from acetyl-CoA: step 1/1. Component of the acetyl coenzyme A carboxylase (ACC) complex. Biotin carboxylase (BC) catalyzes the carboxylation of biotin on its carrier protein (BCCP) and then the CO(2) group is transferred by the transcarboxylase to acetyl-CoA to form malonyl-CoA. The protein is Acetyl-coenzyme A carboxylase carboxyl transferase subunit beta of Clostridium novyi (strain NT).